The primary structure comprises 202 residues: Small ribosomal subunit protein bS20c (202 aa).

The N-terminal 79 residues, 1–79 (MATIVQCLSS…KPMRQLIVCE (79 aa)), are a transit peptide targeting the chloroplast. Positions 89–110 (SAAKRARQAEKRRVYNKSKKSE) are disordered.

Belongs to the bacterial ribosomal protein bS20 family. Part of the 30S ribosomal subunit.

The protein localises to the plastid. The protein resides in the chloroplast. In terms of biological role, binds directly to 16S ribosomal RNA. This Arabidopsis thaliana (Mouse-ear cress) protein is Small ribosomal subunit protein bS20c (RPS20).